A 313-amino-acid polypeptide reads, in one-letter code: Ribosomal protein L11 methyltransferase (313 aa).

Residues threonine 161, glycine 182, aspartate 204, and asparagine 247 each coordinate S-adenosyl-L-methionine.

This sequence belongs to the methyltransferase superfamily. PrmA family.

The protein localises to the cytoplasm. The enzyme catalyses L-lysyl-[protein] + 3 S-adenosyl-L-methionine = N(6),N(6),N(6)-trimethyl-L-lysyl-[protein] + 3 S-adenosyl-L-homocysteine + 3 H(+). Functionally, methylates ribosomal protein L11. In Alkaliphilus oremlandii (strain OhILAs) (Clostridium oremlandii (strain OhILAs)), this protein is Ribosomal protein L11 methyltransferase.